We begin with the raw amino-acid sequence, 201 residues long: Xanthine phosphoribosyltransferase (201 aa).

Leu20 and Asn27 together coordinate xanthine. 129–133 (ANGQA) is a 5-phospho-alpha-D-ribose 1-diphosphate binding site. A xanthine-binding site is contributed by Lys157.

The protein belongs to the purine/pyrimidine phosphoribosyltransferase family. Xpt subfamily. In terms of assembly, homodimer.

It is found in the cytoplasm. It carries out the reaction XMP + diphosphate = xanthine + 5-phospho-alpha-D-ribose 1-diphosphate. It functions in the pathway purine metabolism; XMP biosynthesis via salvage pathway; XMP from xanthine: step 1/1. Converts the preformed base xanthine, a product of nucleic acid breakdown, to xanthosine 5'-monophosphate (XMP), so it can be reused for RNA or DNA synthesis. The polypeptide is Xanthine phosphoribosyltransferase (Shouchella clausii (strain KSM-K16) (Alkalihalobacillus clausii)).